A 487-amino-acid chain; its full sequence is 3-octaprenyl-4-hydroxybenzoate carboxy-lyase (487 aa).

Residue asparagine 172 participates in Mn(2+) binding. Residues isoleucine 175–arginine 177, arginine 189–leucine 191, and arginine 194–glycine 195 each bind prenylated FMN. Glutamate 238 contacts Mn(2+). The active-site Proton donor is aspartate 287.

The protein belongs to the UbiD family. Homohexamer. It depends on prenylated FMN as a cofactor. Requires Mn(2+) as cofactor.

Its subcellular location is the cell membrane. The catalysed reaction is a 4-hydroxy-3-(all-trans-polyprenyl)benzoate + H(+) = a 2-(all-trans-polyprenyl)phenol + CO2. The protein operates within cofactor biosynthesis; ubiquinone biosynthesis. Its function is as follows. Catalyzes the decarboxylation of 3-octaprenyl-4-hydroxy benzoate to 2-octaprenylphenol, an intermediate step in ubiquinone biosynthesis. This chain is 3-octaprenyl-4-hydroxybenzoate carboxy-lyase, found in Thiobacillus denitrificans (strain ATCC 25259 / T1).